The chain runs to 143 residues: Beta/delta-urticatoxin-Uf2b (143 aa).

The N-terminal stretch at 1 to 18 (MGAIVLVALMALVASSSA) is a signal peptide. Positions 19–80 (FSDIEHNIMK…MMLSGRPQPN (62 aa)) are excised as a propeptide. Disulfide bonds link cysteine 83-cysteine 100, cysteine 90-cysteine 105, cysteine 99-cysteine 113, cysteine 115-cysteine 129, cysteine 122-cysteine 134, and cysteine 128-cysteine 142.

Belongs to the urticatoxin-2 family. As to expression, expressed in trichomes, that are stiff epidermal hairs located on the surface of petioles and leaves.

Its subcellular location is the secreted. In terms of biological role, plant defense neurotoxin that causes pain and systemic symptoms in mammals via modulation of voltage-gated sodium channels (Nav). Potent modulator of human Nav1.5/SCN5A (EC(50)=55 nM), Nav1.6/SCN8A (EC(50)=0.86 nM), and Nav1.7/SCN9A (EC(50)=208 nM), where it shifts the activation threshold to more negative potentials and delays fast inactivation. Also shifts the voltage-dependence of steady-state fast inactivation of Nav1.6/SCN8A, but not that of Nav1.5/SCN5A or Nav1.7/SCN9A. On Nav1.7/SCN9A, principally acts by binding to extracellular loops of domain IV (Nav site 3). In vivo, intraplantar injection into mice causes numerous dose-dependent, immediate, and long-lasting spontaneous pain behaviors, while no swelling is observed in the injected paw. At the highest doses tested, systemic symptoms including hypokinesia and hypersalivation are observed. The polypeptide is Beta/delta-urticatoxin-Uf2b (Urtica ferox (Tree nettle)).